Consider the following 293-residue polypeptide: tRNA pseudouridine synthase B (293 aa).

Asp38 acts as the Nucleophile in catalysis.

The protein belongs to the pseudouridine synthase TruB family. Type 1 subfamily.

It carries out the reaction uridine(55) in tRNA = pseudouridine(55) in tRNA. Responsible for synthesis of pseudouridine from uracil-55 in the psi GC loop of transfer RNAs. The sequence is that of tRNA pseudouridine synthase B from Solibacter usitatus (strain Ellin6076).